The following is a 94-amino-acid chain: Pyrimidine/purine nucleoside phosphorylase (94 aa).

It belongs to the nucleoside phosphorylase PpnP family.

The enzyme catalyses a purine D-ribonucleoside + phosphate = a purine nucleobase + alpha-D-ribose 1-phosphate. The catalysed reaction is adenosine + phosphate = alpha-D-ribose 1-phosphate + adenine. It carries out the reaction cytidine + phosphate = cytosine + alpha-D-ribose 1-phosphate. It catalyses the reaction guanosine + phosphate = alpha-D-ribose 1-phosphate + guanine. The enzyme catalyses inosine + phosphate = alpha-D-ribose 1-phosphate + hypoxanthine. The catalysed reaction is thymidine + phosphate = 2-deoxy-alpha-D-ribose 1-phosphate + thymine. It carries out the reaction uridine + phosphate = alpha-D-ribose 1-phosphate + uracil. It catalyses the reaction xanthosine + phosphate = alpha-D-ribose 1-phosphate + xanthine. In terms of biological role, catalyzes the phosphorolysis of diverse nucleosides, yielding D-ribose 1-phosphate and the respective free bases. Can use uridine, adenosine, guanosine, cytidine, thymidine, inosine and xanthosine as substrates. Also catalyzes the reverse reactions. In Pseudomonas putida (strain GB-1), this protein is Pyrimidine/purine nucleoside phosphorylase.